The chain runs to 507 residues: UDP-N-acetylmuramoyl-L-alanyl-D-glutamate--2,6-diaminopimelate ligase (507 aa).

Residue serine 32 coordinates UDP-N-acetyl-alpha-D-muramoyl-L-alanyl-D-glutamate. Residue 117 to 123 (GTNGKTT) coordinates ATP. UDP-N-acetyl-alpha-D-muramoyl-L-alanyl-D-glutamate is bound by residues 159-160 (TT), serine 186, glutamine 192, and arginine 194. An N6-carboxylysine modification is found at lysine 226. Residues arginine 400, 424 to 427 (DNPR), glycine 475, and glutamate 479 contribute to the meso-2,6-diaminopimelate site. The Meso-diaminopimelate recognition motif signature appears at 424-427 (DNPR).

The protein belongs to the MurCDEF family. MurE subfamily. It depends on Mg(2+) as a cofactor. Carboxylation is probably crucial for Mg(2+) binding and, consequently, for the gamma-phosphate positioning of ATP.

The protein localises to the cytoplasm. It catalyses the reaction UDP-N-acetyl-alpha-D-muramoyl-L-alanyl-D-glutamate + meso-2,6-diaminopimelate + ATP = UDP-N-acetyl-alpha-D-muramoyl-L-alanyl-gamma-D-glutamyl-meso-2,6-diaminopimelate + ADP + phosphate + H(+). Its pathway is cell wall biogenesis; peptidoglycan biosynthesis. Its function is as follows. Catalyzes the addition of meso-diaminopimelic acid to the nucleotide precursor UDP-N-acetylmuramoyl-L-alanyl-D-glutamate (UMAG) in the biosynthesis of bacterial cell-wall peptidoglycan. This Prochlorococcus marinus (strain MIT 9313) protein is UDP-N-acetylmuramoyl-L-alanyl-D-glutamate--2,6-diaminopimelate ligase.